Reading from the N-terminus, the 491-residue chain is MKNQDQALIFEVSKEGRIGYSLPKLDVEEVKLEDVFESDYIRVEDAELPEVSELDIMRHYTALSNRNHGVDSGFYPLGSCTMKYNPKINESVARFAGFANIHPLQDEKTVQGAMELMYDLQEHLIEITGMDTVTLQPAAGAHGEWTGLMLIRAYHEANGDFNRTKVIVPDSAHGTNPASATVAGFETITVKSNEHGLVDLEDLKRVVNEETAALMLTNPNTLGLFEENILEMAEIVHNAGGKLYYDGANLNAVLSQARPGDMGFDVVHLNLHKTFTGPHGGGGPGSGPVGVKADLIPYLPKPILEKTENGYHFNYDRPEAIGRVKPFYGNFGINVRAYTYIRSMGPDGLRAVTEYAVLNANYMMRRLAPFYDLPFDRHCKHEFVLSGRRQKKLGVRTLDIAKRLLDFGYHPPTIYFPLNVEECIMIEPTETESKETLDGFIDKMIQIAKEVEENPEVVQEAPHTTVIKRLDETMAARKPVLRYAKPAPVQV.

K273 carries the post-translational modification N6-(pyridoxal phosphate)lysine.

The protein belongs to the GcvP family. C-terminal subunit subfamily. In terms of assembly, the glycine cleavage system is composed of four proteins: P, T, L and H. In this organism, the P 'protein' is a heterodimer of two subunits. It depends on pyridoxal 5'-phosphate as a cofactor.

The enzyme catalyses N(6)-[(R)-lipoyl]-L-lysyl-[glycine-cleavage complex H protein] + glycine + H(+) = N(6)-[(R)-S(8)-aminomethyldihydrolipoyl]-L-lysyl-[glycine-cleavage complex H protein] + CO2. In terms of biological role, the glycine cleavage system catalyzes the degradation of glycine. The P protein binds the alpha-amino group of glycine through its pyridoxal phosphate cofactor; CO(2) is released and the remaining methylamine moiety is then transferred to the lipoamide cofactor of the H protein. The protein is Probable glycine dehydrogenase (decarboxylating) subunit 2 of Bacillus anthracis (strain A0248).